A 318-amino-acid polypeptide reads, in one-letter code: DNA-directed RNA polymerase subunit alpha 2 (318 aa).

An alpha N-terminal domain (alpha-NTD) region spans residues 1–227 (MALENLLHPT…NQLRNILDIE (227 aa)). The segment at 242–318 (INPILLKHVE…TLIENWPQDL (77 aa)) is alpha C-terminal domain (alpha-CTD).

Belongs to the RNA polymerase alpha chain family. As to quaternary structure, homodimer. The RNAP catalytic core consists of 2 alpha, 1 beta, 1 beta' and 1 omega subunit. When a sigma factor is associated with the core the holoenzyme is formed, which can initiate transcription.

The enzyme catalyses RNA(n) + a ribonucleoside 5'-triphosphate = RNA(n+1) + diphosphate. Functionally, DNA-dependent RNA polymerase catalyzes the transcription of DNA into RNA using the four ribonucleoside triphosphates as substrates. This is DNA-directed RNA polymerase subunit alpha 2 from Francisella tularensis subsp. tularensis (strain FSC 198).